We begin with the raw amino-acid sequence, 228 residues long: Eukaryotic translation initiation factor 4E-1 (228 aa).

EIF4G-binding regions lie at residues 53–56 (HLLE) and 63–99 (FDTP…NNIH). MRNA contacts are provided by residues 71–76 (KQDDWG), lysine 103, and 121–122 (WE). Cysteine 126 and cysteine 164 form a disulfide bridge. Residues 147–156 (YTLLAMIGEQ) form an EIF4G-binding region. Residues 171–176 (RGRAEK) and 216–220 (RKLDR) each bind mRNA.

The protein belongs to the eukaryotic initiation factor 4E family. EIF4F is a multi-subunit complex, the composition of which varies with external and internal environmental conditions. It is composed of at least EIF4A, EIF4E and EIF4G. EIF4E is also known to interact with other partners. In higher plants two isoforms of EIF4F have been identified, named isoform EIF4F and isoform EIF(iso)4F. Isoform EIF4F has subunits p220 and p26, whereas isoform EIF(iso)4F has subunits p82 and p28. As to quaternary structure, (Microbial infection) Interacts with potyvirus viral genome-linked protein (VPg); this interaction is possible in susceptible hosts but impaired in resistant plants. Post-translationally, according to the redox status, the Cys-126-Cys-164 disulfide bridge may have a role in regulating protein function by affecting its ability to bind capped mRNA.

The protein resides in the nucleus. Its subcellular location is the cytoplasm. Its function is as follows. Component of the protein complex eIF4F, which is involved in the recognition of the mRNA cap, ATP-dependent unwinding of 5'-terminal secondary structure and recruitment of mRNA to the ribosome. Recognizes and binds the 7-methylguanosine-containing mRNA cap during an early step in the initiation of protein synthesis and facilitates ribosome binding by inducing the unwinding of the mRNAs secondary structures. Key component of recessive resistance to potyviruses. In terms of biological role, (Microbial infection) Susceptibility host factor required for viral infection by recruiting viral RNAs to the host ribosomal complex via an interaction with viral genome-linked protein (VPg). Also seems to be involved in virus movement from cell-to-cell. The chain is Eukaryotic translation initiation factor 4E-1 from Pisum sativum (Garden pea).